Here is a 220-residue protein sequence, read N- to C-terminus: METDDQYYRAIKKIKEAAEASNRAYLTSSKLADMLGISQQSASRIIIDLEKNGYITRTVTKRGQILNITEKGLDVLYTEFADLSRILAIKNNVVITGTVTSGMGEGRYYVARKQYIIQFQEKLGIIPYLGTLNIKVDQASLPELRKIRGFRGIHIEGFKTEDRTFGSVKAFPAKIQNIPCFVIMPERTVYTDVIEIISDKYLREEINLHDGDRVSVEVYT.

The tract at residues 1 to 92 (METDDQYYRA…LSRILAIKNN (92 aa)) is H-T-H motif-like. The riboflavin kinase stretch occupies residues 93–220 (VVITGTVTSG…GDRVSVEVYT (128 aa)). 102–107 (GMGEGR) serves as a coordination point for CDP. The Mg(2+) site is built by T131 and N133. FMN is bound by residues T188 and E195. Position 200–203 (200–203 (KYLR)) interacts with CDP.

It belongs to the archaeal riboflavin kinase family. Mg(2+) serves as cofactor.

It catalyses the reaction riboflavin + CTP = CDP + FMN + H(+). Its pathway is cofactor biosynthesis; FMN biosynthesis; FMN from riboflavin (CTP route): step 1/1. Functionally, catalyzes the CTP-dependent phosphorylation of riboflavin (vitamin B2) to form flavin mononucleotide (FMN). The chain is Riboflavin kinase (ribK) from Thermoplasma acidophilum (strain ATCC 25905 / DSM 1728 / JCM 9062 / NBRC 15155 / AMRC-C165).